The chain runs to 342 residues: Phosphoribosylformylglycinamidine cyclo-ligase (342 aa).

Belongs to the AIR synthase family.

Its subcellular location is the cytoplasm. The catalysed reaction is 2-formamido-N(1)-(5-O-phospho-beta-D-ribosyl)acetamidine + ATP = 5-amino-1-(5-phospho-beta-D-ribosyl)imidazole + ADP + phosphate + H(+). It participates in purine metabolism; IMP biosynthesis via de novo pathway; 5-amino-1-(5-phospho-D-ribosyl)imidazole from N(2)-formyl-N(1)-(5-phospho-D-ribosyl)glycinamide: step 2/2. This Staphylococcus aureus (strain MSSA476) protein is Phosphoribosylformylglycinamidine cyclo-ligase.